Here is a 181-residue protein sequence, read N- to C-terminus: ADP-ribosylation factor 1 (181 aa).

A lipid anchor (N-myristoyl glycine) is attached at Gly2. Residues 25-32, Thr48, Gly70, 126-129, and 160-161 each bind GTP; these read LDGAGKTT, NKQD, and AT. Lys127 participates in a covalent cross-link: Glycyl lysine isopeptide (Lys-Gly) (interchain with G-Cter in ubiquitin).

This sequence belongs to the small GTPase superfamily. Arf family. As to quaternary structure, interacts with RUD3. Interacts with VPS13 (via C-terminal part); the interaction is direct.

Its subcellular location is the golgi apparatus. It catalyses the reaction GTP + H2O = GDP + phosphate + H(+). In terms of biological role, GTP-binding protein involved in Golgi vesicle trafficking. May modulate vesicle budding and uncoating within the Golgi apparatus. May recruit the lipid transfer protein VPS13 to Golgi membranes. Recruits polyadenylate-binding protein PAB1 to COPI vesicles, and this is required for correct localization of the asymmetrically distributed ASH1 mRNA. The protein is ADP-ribosylation factor 1 (ARF1) of Saccharomyces cerevisiae (strain ATCC 204508 / S288c) (Baker's yeast).